The primary structure comprises 239 residues: Pyridoxine 5'-phosphate synthase (239 aa).

3-amino-2-oxopropyl phosphate is bound at residue asparagine 7. A 1-deoxy-D-xylulose 5-phosphate-binding site is contributed by 9–10; the sequence is DH. Residue arginine 18 coordinates 3-amino-2-oxopropyl phosphate. Histidine 43 serves as the catalytic Proton acceptor. 1-deoxy-D-xylulose 5-phosphate contacts are provided by arginine 45 and histidine 50. The Proton acceptor role is filled by glutamate 70. Residue threonine 100 coordinates 1-deoxy-D-xylulose 5-phosphate. Histidine 191 (proton donor) is an active-site residue. 3-amino-2-oxopropyl phosphate is bound by residues glycine 192 and 213–214; that span reads GH.

It belongs to the PNP synthase family. As to quaternary structure, homooctamer; tetramer of dimers.

It localises to the cytoplasm. The enzyme catalyses 3-amino-2-oxopropyl phosphate + 1-deoxy-D-xylulose 5-phosphate = pyridoxine 5'-phosphate + phosphate + 2 H2O + H(+). It functions in the pathway cofactor biosynthesis; pyridoxine 5'-phosphate biosynthesis; pyridoxine 5'-phosphate from D-erythrose 4-phosphate: step 5/5. In terms of biological role, catalyzes the complicated ring closure reaction between the two acyclic compounds 1-deoxy-D-xylulose-5-phosphate (DXP) and 3-amino-2-oxopropyl phosphate (1-amino-acetone-3-phosphate or AAP) to form pyridoxine 5'-phosphate (PNP) and inorganic phosphate. The polypeptide is Pyridoxine 5'-phosphate synthase (Geotalea uraniireducens (strain Rf4) (Geobacter uraniireducens)).